The chain runs to 139 residues: Small ribosomal subunit protein uS11 (139 aa).

Residues 117–139 (VEDVTPIPHDGTRPKGGRRGRRV) are disordered.

The protein belongs to the universal ribosomal protein uS11 family. In terms of assembly, part of the 30S ribosomal subunit.

Located on the platform of the 30S subunit. The sequence is that of Small ribosomal subunit protein uS11 from Thermococcus onnurineus (strain NA1).